Here is a 232-residue protein sequence, read N- to C-terminus: uncharacterized protein (232 aa).

One can recognise an Autotransporter domain in the interval 1 to 232; that stretch reads MIIKKSGGRW…LYTMGVSARF (232 aa).

This is an uncharacterized protein from Escherichia coli (strain K12).